Consider the following 315-residue polypeptide: Trimethylguanosine synthase (315 aa).

The tract at residues 1–58 is required for correct nucleolar localization; sequence MGRTFIHASKIKHAARKRKHHSNFRTLIKLLNNDAYKIESSKPLKNGKLFKYWKNRRR. Aspartate 126 serves as a coordination point for S-adenosyl-L-methionine. The interval 271–315 is disordered; sequence TENSRRESSEKEELSSENEELSKRKKHESTTTTKDNTVDIYDVNG. The segment covering 273 to 284 has biased composition (basic and acidic residues); it reads NSRRESSEKEEL.

The protein belongs to the methyltransferase superfamily. Trimethylguanosine synthase family. Monomer. Interacts with the spliceosomal snRNP core component SMB1 and the snoRNP components CBF5 and NOP58.

The protein localises to the nucleus. It is found in the nucleolus. It carries out the reaction a 5'-end (N(7)-methyl 5'-triphosphoguanosine)-ribonucleoside in snRNA + S-adenosyl-L-methionine = a 5'-end (N(2),N(7)-dimethyl 5'-triphosphoguanosine)-ribonucleoside in snRNA + S-adenosyl-L-homocysteine + H(+). The catalysed reaction is a 5'-end (N(7)-methyl 5'-triphosphoguanosine)-ribonucleoside in snoRNA + S-adenosyl-L-methionine = a 5'-end (N(2),N(7)-dimethyl 5'-triphosphoguanosine)-ribonucleoside in snoRNA + S-adenosyl-L-homocysteine + H(+). The enzyme catalyses a 5'-end (N(2),N(7)-dimethyl 5'-triphosphoguanosine)-ribonucleoside in snRNA + S-adenosyl-L-methionine = a 5'-end (N(2),N(2),N(7)-trimethyl 5'-triphosphoguanosine)-ribonucleoside in snRNA + S-adenosyl-L-homocysteine + H(+). It catalyses the reaction a 5'-end (N(2),N(7)-dimethyl 5'-triphosphoguanosine)-ribonucleoside in snoRNA + S-adenosyl-L-methionine = a 5'-end (N(2),N(2),N(7)-trimethyl 5'-triphosphoguanosine)-ribonucleoside in snoRNA + S-adenosyl-L-homocysteine + H(+). Substrate inhibited by S-adenosyl-L-homocysteine. Catalyzes the two serial methylation steps for the conversion of the 7-monomethylguanosine (m(7)G) caps of snRNAs and snoRNAs to a 2,2,7-trimethylguanosine (m(2,2,7)G) cap structure. The enzyme is specific for guanine, and N7 methylation must precede N2 methylation. Hypermethylates the m3G cap on TLC1 telomerase which affects telomere silencing and telomere length regulation. Required for pre-mRNA splicing, pre-rRNA processing and small ribosomal subunit synthesis. Involved in nucleolar structural organization. The polypeptide is Trimethylguanosine synthase (TGS1) (Saccharomyces cerevisiae (strain ATCC 204508 / S288c) (Baker's yeast)).